We begin with the raw amino-acid sequence, 207 residues long: Urease accessory protein UreG (207 aa).

Gly-14–Thr-21 is a binding site for GTP.

This sequence belongs to the SIMIBI class G3E GTPase family. UreG subfamily. In terms of assembly, homodimer. UreD, UreF and UreG form a complex that acts as a GTP-hydrolysis-dependent molecular chaperone, activating the urease apoprotein by helping to assemble the nickel containing metallocenter of UreC. The UreE protein probably delivers the nickel.

Its subcellular location is the cytoplasm. Facilitates the functional incorporation of the urease nickel metallocenter. This process requires GTP hydrolysis, probably effectuated by UreG. The sequence is that of Urease accessory protein UreG from Chelativorans sp. (strain BNC1).